Consider the following 853-residue polypeptide: Guanine nucleotide exchange protein smcr8a (853 aa).

One can recognise a uDENN FLCN/SMCR8-type domain in the interval 47-219; sequence TSYAKFSKDF…KETELQKMNN (173 aa). Disordered stretches follow at residues 272–298 and 418–454; these read PVMD…SRKS and LKPG…SFSS. A compositionally biased stretch (polar residues) spans 280-298; sequence DTNPSDSAENTVETESRKS. A cDENN FLCN/SMCR8-type domain is found at 316-753; sequence RLKTLEELCD…LISHLADHRT (438 aa). The segment covering 421–432 has biased composition (low complexity); the sequence is GVESGEGPPESS. A compositionally biased stretch (polar residues) spans 433-454; sequence TSDITQETSEAADTETKGSFSS. Positions 762–826 constitute a dDENN FLCN/SMCR8-type domain; sequence FLHIQGMLTQ…IIQYLSELIK (65 aa).

It belongs to the SMCR8 family. As to quaternary structure, component of the C9orf72-SMCR8 complex. The C9orf72-SMCR8 complex associates with the ATG1/ULK1 kinase complex.

It is found in the cytoplasm. It localises to the nucleus. Functionally, component of the C9orf72-SMCR8 complex, a complex that has guanine nucleotide exchange factor (GEF) activity and regulates autophagy. In the complex, C9orf72 and SMCR8 probably constitute the catalytic subunits that promote the exchange of GDP to GTP, converting inactive GDP-bound RAB8A and RAB39B into their active GTP-bound form, thereby promoting autophagosome maturation. The C9orf72-SMCR8 complex also acts as a negative regulator of autophagy initiation by interacting with the ATG1/ULK1 kinase complex and inhibiting its protein kinase activity. The sequence is that of Guanine nucleotide exchange protein smcr8a (smcr8a) from Danio rerio (Zebrafish).